The chain runs to 395 residues: Dihydroorotate dehydrogenase (quinone), mitochondrial (395 aa).

The N-terminal 10 residues, 1–10 (MAWRHLKKRA), are a transit peptide targeting the mitochondrion; not cleaved. Topologically, residues 1-10 (MAWRHLKKRA) are mitochondrial matrix. The helical transmembrane segment at 11 to 30 (QDAVIILGGGGLLFASYLMA) threads the bilayer. The Mitochondrial intermembrane portion of the chain corresponds to 31–395 (TGDERFYAEH…TDAIGADHRR (365 aa)). FMN-binding positions include 95–99 (AGFDK) and Ser-119. A substrate-binding site is contributed by Lys-99. Residue 144 to 148 (NRYGF) coordinates substrate. 2 residues coordinate FMN: Asn-180 and Asn-211. 211 to 216 (NVSSPN) is a binding site for substrate. The active-site Nucleophile is the Ser-214. Residues Lys-254 and Thr-282 each coordinate FMN. Position 283–284 (283–284 (NT)) interacts with substrate. FMN is bound by residues Gly-305, Gly-334, and 355-356 (YT).

This sequence belongs to the dihydroorotate dehydrogenase family. Type 2 subfamily. In terms of assembly, monomer. It depends on FMN as a cofactor. The uncleaved transit peptide is required for mitochondrial targeting and proper membrane integration.

The protein resides in the mitochondrion inner membrane. The enzyme catalyses (S)-dihydroorotate + a quinone = orotate + a quinol. It participates in pyrimidine metabolism; UMP biosynthesis via de novo pathway; orotate from (S)-dihydroorotate (quinone route): step 1/1. Catalyzes the conversion of dihydroorotate to orotate with quinone as electron acceptor. Required for UMP biosynthesis via de novo pathway. The chain is Dihydroorotate dehydrogenase (quinone), mitochondrial (DHODH) from Homo sapiens (Human).